The chain runs to 229 residues: Cilia- and flagella-associated protein 95 (229 aa).

Over 1 to 123 the chain is Extracellular; the sequence is MDSLDRSCQD…LLNEETVSSG (123 aa). Asn-75 carries an N-linked (GlcNAc...) asparagine glycan. A helical transmembrane segment spans residues 124–140; it reads IIERVTGLPATGFGAVF. At 141–229 the chain is on the cytoplasmic side; the sequence is PRHPPDWSKM…PLTSGPIVPI (89 aa). Positions 153-163 are mn; the sequence is LTTYSEDYVPP.

Microtubule inner protein component of sperm flagellar doublet microtubules. Interacts with MYH9. Interacts with MYH10. As to expression, expressed in undifferentiated embryonic stem cells. Expressed in airway epithelial cells.

It localises to the cytoplasm. It is found in the cytoskeleton. Its subcellular location is the cilium axoneme. The protein resides in the flagellum axoneme. The protein localises to the cell membrane. In terms of biological role, microtubule inner protein (MIP) part of the dynein-decorated doublet microtubules (DMTs) in cilia axoneme, which is required for motile cilia beating. This is Cilia- and flagella-associated protein 95 from Homo sapiens (Human).